The primary structure comprises 175 residues: Shikimate kinase (175 aa).

12 to 17 (GAGKTT) contacts ATP. Mg(2+) is bound at residue Thr-16. Substrate is bound by residues Asp-34, Arg-58, and Gly-80. Arg-117 serves as a coordination point for ATP. A substrate-binding site is contributed by Arg-136.

Belongs to the shikimate kinase family. In terms of assembly, monomer. The cofactor is Mg(2+).

Its subcellular location is the cytoplasm. It catalyses the reaction shikimate + ATP = 3-phosphoshikimate + ADP + H(+). It participates in metabolic intermediate biosynthesis; chorismate biosynthesis; chorismate from D-erythrose 4-phosphate and phosphoenolpyruvate: step 5/7. Its function is as follows. Catalyzes the specific phosphorylation of the 3-hydroxyl group of shikimic acid using ATP as a cosubstrate. This Saccharopolyspora erythraea (strain ATCC 11635 / DSM 40517 / JCM 4748 / NBRC 13426 / NCIMB 8594 / NRRL 2338) protein is Shikimate kinase.